The chain runs to 529 residues: MAKNTITKTLKLRIVRPYNSAEVEKIVADEKNNREKIALEKNKDKVKEACSKHLKVAAYCTTQVERNACLFCKARKLDDKFYQKLRGQFPDAVFWQEISEIFRQLQKQAAEIYNQSLIELYYEIFIKGKGIANASSVEHYLSDVCYTRAAELFKNAAIASGLRSKIKSNFRLKELKNMKSGLPTTKSDNFPIPLVKQKGGQYTGFEISNHNSDFIIKIPFGRWQVKKEIDKYRPWEKFDFEQVQKSPKPISLLLSTQRRKRNKGWSKDEGTEAEIKKVMNGDYQTSYIEVKRGSKIGEKSAWMLNLSIDVPKIDKGVDPSIIGGIDVGVKSPLVCAINNAFSRYSISDNDLFHFNKKMFARRRILLKKNRHKRAGHGAKNKLKPITILTEKSERFRKKLIERWACEIADFFIKNKVGTVQMENLESMKRKEDSYFNIRLRGFWPYAEMQNKIEFKLKQYGIEIRKVAPNNTSKTCSKCGHLNNYFNFEYRKKNKFPHFKCEKCNFKENADYNAALNISNPKLKSTKEEP.

Positions 1–95 are zinc finger domain (ZF); that stretch reads MAKNTITKTL…RGQFPDAVFW (95 aa). Residues Cys-50, His-53, Cys-69, and Cys-72 each contribute to the Zn(2+) site. Positions 96–192 are recognition domain (REC); the sequence is QEISEIFRQL…PTTKSDNFPI (97 aa). The interval 193-312 is wedge domain (WED); sequence PLVKQKGGQY…MLNLSIDVPK (120 aa). Residues 313-321 form a linker region; it reads IDKGVDPSI. Residues 322–473 are ruvC-I; it reads IGGIDVGVKS…RKVAPNNTSK (152 aa). Residues Asp-326 and Glu-422 contribute to the active site. Residues 474-508 are target nucleic acid-binding (TNB); that stretch reads TCSKCGHLNNYFNFEYRKKNKFPHFKCEKCNFKEN. Zn(2+) contacts are provided by Cys-475 and Cys-478. Residue Arg-490 is part of the active site. Residues Cys-500 and Cys-503 each contribute to the Zn(2+) site. Residues 509 to 529 form a ruvC-II region; the sequence is ADYNAALNISNPKLKSTKEEP. Asp-510 is an active-site residue.

Belongs to the CRISPR-associated endonuclease Cas12f family. In terms of assembly, an asymmetric homodimer. Guide RNA is probably required for dimerization. Mg(2+) is required as a cofactor. The cofactor is Zn(2+).

With respect to regulation, target ssDNA cleavage is inhibited by EDTA. Activity is maximal with 5-50 mM NaCl, is less efficient at higher NaCl concentrations. In terms of biological role, CRISPR (clustered regularly interspaced short palindromic repeat), is an adaptive immune system that provides protection against mobile genetic elements (viruses, transposable elements and conjugative plasmids). CRISPR clusters contain sequences complementary to antecedent mobile elements and target invading nucleic acids. CRISPR clusters are transcribed and processed into CRISPR RNA (crRNA), which requires a trans-encoded small RNA (tracrRNA), but not this protein (in vitro). Upon expression in E.coli of this protein, a mini CRISPR array and the probable tracrRNA, the protein associates with both RNAs. The mini system is not active in E.coli against phiX174 phage, nor is it active in protection against transformation by foreign plasmids. In vitro the purified protein-tracrRNA-crRNA complex cleaves ssDNA complementary to the crRNA; target cleavage requires both tracrRNA and crRNA, but not a protospacer adjacent motif (PAM). The tracrRNA-crRNA can be replaced by a single guide RNA (sgRNA). 2-nucleotide mismatches in the middle of the crRNA:DNA heteroduplex decrease cleavage. Cleavage occurs just downstream of the heteroduplex. Activation of this protein results in non-specific ssDNA degradation in vitro. In vitro and in E.coli (coexpressed with sgRNA) has dsDNA endonuclease activity, recognizing the 5' PAM sequence TTTR; both sgRNA and a PAM are required for activity. Cleaves the target strand 24 and the nontarget strand 22 bases upstream of the PAM (respectively), resulting in 5' overhangs. The 2 monomers interact differently with the sgRNA and target DNA. Mutagenesis of a dimeric construct shows that one of the RuvC monomers probably cleaves both DNA strands. In Uncultured archaeon, this protein is CRISPR-associated endodeoxyribonuclease Cas12f1.